The sequence spans 245 residues: 1-(5-phosphoribosyl)-5-[(5-phosphoribosylamino)methylideneamino] imidazole-4-carboxamide isomerase (245 aa).

Asp7 serves as the catalytic Proton acceptor. The active-site Proton donor is Asp129.

Belongs to the HisA/HisF family.

Its subcellular location is the cytoplasm. The catalysed reaction is 1-(5-phospho-beta-D-ribosyl)-5-[(5-phospho-beta-D-ribosylamino)methylideneamino]imidazole-4-carboxamide = 5-[(5-phospho-1-deoxy-D-ribulos-1-ylimino)methylamino]-1-(5-phospho-beta-D-ribosyl)imidazole-4-carboxamide. It functions in the pathway amino-acid biosynthesis; L-histidine biosynthesis; L-histidine from 5-phospho-alpha-D-ribose 1-diphosphate: step 4/9. This Aliivibrio fischeri (strain ATCC 700601 / ES114) (Vibrio fischeri) protein is 1-(5-phosphoribosyl)-5-[(5-phosphoribosylamino)methylideneamino] imidazole-4-carboxamide isomerase.